Consider the following 141-residue polypeptide: Nucleoside diphosphate kinase (141 aa).

Residues Lys-11, Phe-59, Arg-87, Thr-93, Arg-104, and Asn-114 each contribute to the ATP site. His-117 functions as the Pros-phosphohistidine intermediate in the catalytic mechanism.

This sequence belongs to the NDK family. As to quaternary structure, homotetramer. It depends on Mg(2+) as a cofactor.

It localises to the cytoplasm. The enzyme catalyses a 2'-deoxyribonucleoside 5'-diphosphate + ATP = a 2'-deoxyribonucleoside 5'-triphosphate + ADP. It catalyses the reaction a ribonucleoside 5'-diphosphate + ATP = a ribonucleoside 5'-triphosphate + ADP. Functionally, major role in the synthesis of nucleoside triphosphates other than ATP. The ATP gamma phosphate is transferred to the NDP beta phosphate via a ping-pong mechanism, using a phosphorylated active-site intermediate. This chain is Nucleoside diphosphate kinase, found in Burkholderia ambifaria (strain MC40-6).